Reading from the N-terminus, the 90-residue chain is Probable Fe(2+)-trafficking protein (90 aa).

It belongs to the Fe(2+)-trafficking protein family.

Functionally, could be a mediator in iron transactions between iron acquisition and iron-requiring processes, such as synthesis and/or repair of Fe-S clusters in biosynthetic enzymes. The protein is Probable Fe(2+)-trafficking protein of Bordetella bronchiseptica (strain ATCC BAA-588 / NCTC 13252 / RB50) (Alcaligenes bronchisepticus).